Reading from the N-terminus, the 427-residue chain is GPI mannosyltransferase 2 (427 aa).

The next 8 helical transmembrane spans lie at 7–27 (LTTV…FAPG), 119–139 (ATLL…ALTL), 164–184 (FLLA…GMLL), 197–217 (ITLA…FSVA), 247–267 (AVLF…YMHY), 318–338 (VPNF…TVYF), 350–370 (LVYI…VQII), and 404–424 (LYVN…ACFL).

This sequence belongs to the PIGV family.

Its subcellular location is the endoplasmic reticulum membrane. It participates in glycolipid biosynthesis; glycosylphosphatidylinositol-anchor biosynthesis. Functionally, mannosyltransferase involved in glycosylphosphatidylinositol-anchor biosynthesis. Transfers the second mannose to the glycosylphosphatidylinositol during GPI precursor assembly. This Eremothecium gossypii (strain ATCC 10895 / CBS 109.51 / FGSC 9923 / NRRL Y-1056) (Yeast) protein is GPI mannosyltransferase 2 (GPI18).